A 256-amino-acid polypeptide reads, in one-letter code: Small ribosomal subunit protein eS1 (256 aa).

N-acetylalanine; partial is present on A2.

This sequence belongs to the eukaryotic ribosomal protein eS1 family. As to quaternary structure, component of the small ribosomal subunit. Mature ribosomes consist of a small (40S) and a large (60S) subunit. The 40S subunit contains about 33 different proteins and 1 molecule of RNA (18S). The 60S subunit contains about 49 different proteins and 3 molecules of RNA (25S, 5.8S and 5S).

It is found in the cytoplasm. This Eremothecium gossypii (strain ATCC 10895 / CBS 109.51 / FGSC 9923 / NRRL Y-1056) (Yeast) protein is Small ribosomal subunit protein eS1.